The primary structure comprises 432 residues: Putative D-alanyl-D-alanine carboxypeptidase (432 aa).

A helical; Signal-anchor transmembrane segment spans residues 7–25 (ATVLLTFSLSAFAVEYPVL).

This sequence belongs to the peptidase S12 family. YfeW subfamily.

It localises to the cell inner membrane. The catalysed reaction is Preferential cleavage: (Ac)2-L-Lys-D-Ala-|-D-Ala. Also transpeptidation of peptidyl-alanyl moieties that are N-acyl substituents of D-alanine.. This is Putative D-alanyl-D-alanine carboxypeptidase from Salmonella paratyphi A (strain ATCC 9150 / SARB42).